Here is a 136-residue protein sequence, read N- to C-terminus: Calmodulin-A (136 aa).

4 consecutive EF-hand domains span residues 1 to 36, 37 to 72, 74 to 109, and 110 to 136; these read EQIA…LGQN, PTEA…KMKD, DSEE…LGEK, and LTDE…EEFV. The Ca(2+) site is built by Asp-14, Asp-16, Asp-18, Thr-20, Glu-25, Asp-50, Asp-52, Asn-54, Thr-56, Glu-61, Asp-87, Asp-89, Asn-91, Tyr-93, and Glu-98. Lys-109 carries the post-translational modification N6,N6,N6-trimethyllysine. Ca(2+)-binding residues include Asp-123, Asp-125, Asp-127, Gln-129, and Glu-134.

The protein belongs to the calmodulin family.

Functionally, calmodulin acts as part of a calcium signal transduction pathway by mediating the control of a large number of enzymes, ion channels, aquaporins and other proteins through calcium-binding. Calcium-binding is required for the activation of calmodulin. Among the enzymes to be stimulated by the calmodulin-calcium complex are a number of protein kinases, such as myosin light-chain kinases and calmodulin-dependent protein kinase type II (CaMK2), and phosphatases. The protein is Calmodulin-A (calm1) of Oryzias latipes (Japanese rice fish).